A 698-amino-acid chain; its full sequence is G1/S-specific cyclin CCN1 (698 aa).

Positions methionine 1 to glutamine 11 are enriched in low complexity. Disordered regions lie at residues methionine 1–isoleucine 21, glutamine 277–aspartate 326, aspartate 469–leucine 577, serine 599–tyrosine 619, and asparagine 659–glutamine 698. The segment covering glutamine 277–serine 302 has biased composition (polar residues). Composition is skewed to acidic residues over residues aspartate 310–aspartate 326 and aspartate 469–alanine 480. Polar residues-rich tracts occupy residues aspartate 493–glutamine 520 and proline 528–alanine 567. A compositionally biased stretch (polar residues) spans asparagine 659–asparagine 669. Over residues glutamine 670–tyrosine 690 the composition is skewed to low complexity.

This sequence belongs to the cyclin family.

Its function is as follows. Essential for the control of the cell cycle at the G1/S (start) transition. Interacts with the CDC2 protein kinase to form MPF. The polypeptide is G1/S-specific cyclin CCN1 (CCN1) (Candida albicans (strain WO-1) (Yeast)).